Reading from the N-terminus, the 1954-residue chain is Integrin beta-like protein C (1954 aa).

Positions 1–20 (MNKLFYLFILIASLFILTDA) are cleaved as a signal peptide. Residues 21–1883 (SHFRFGTISW…TTTQTNDNKT (1863 aa)) lie on the Extracellular side of the membrane. N-linked (GlcNAc...) asparagine glycosylation is found at Asn138 and Asn354. Residues 428–465 (YGENCVAVPPCVNGVPNSGINGDGKCLCSNGWTGADCS) form the EGF-like domain. 2 cysteine pairs are disulfide-bonded: Cys438–Cys453 and Cys455–Cys464. An N-linked (GlcNAc...) asparagine glycan is attached at Asn479. Residues 521–706 (DVYVLVDANL…TGVKNVLSKI (186 aa)) form the VWFA domain. Asn1348, Asn1382, Asn1628, Asn1678, Asn1742, Asn1770, Asn1820, Asn1860, and Asn1881 each carry an N-linked (GlcNAc...) asparagine glycan. Residues 1884–1904 (VLTGAIAGAAAGTALIAAAAW) traverse the membrane as a helical segment. The Cytoplasmic segment spans residues 1905–1954 (RLLRKAAPPTDTFFSEAAFLGDGVSSNPLYEQSASAAENPLYQSASDTTD).

This sequence belongs to the SIB family. Interacts with talA/talin.

The protein localises to the membrane. Implicated in cellular adhesion. The chain is Integrin beta-like protein C (sibC) from Dictyostelium discoideum (Social amoeba).